Reading from the N-terminus, the 449-residue chain is Kynurenine 3-monooxygenase (449 aa).

The protein belongs to the aromatic-ring hydroxylase family. KMO subfamily. It depends on FAD as a cofactor.

The catalysed reaction is L-kynurenine + NADPH + O2 + H(+) = 3-hydroxy-L-kynurenine + NADP(+) + H2O. It participates in cofactor biosynthesis; NAD(+) biosynthesis; quinolinate from L-kynurenine: step 1/3. Its function is as follows. Catalyzes the hydroxylation of L-kynurenine (L-Kyn) to form 3-hydroxy-L-kynurenine (L-3OHKyn). Required for synthesis of quinolinic acid. This Cytophaga hutchinsonii (strain ATCC 33406 / DSM 1761 / CIP 103989 / NBRC 15051 / NCIMB 9469 / D465) protein is Kynurenine 3-monooxygenase.